A 265-amino-acid polypeptide reads, in one-letter code: Hydroxyethylthiazole kinase (265 aa).

Position 50 (M50) interacts with substrate. Residues R125 and T171 each coordinate ATP. A substrate-binding site is contributed by G198.

Belongs to the Thz kinase family. Requires Mg(2+) as cofactor.

The enzyme catalyses 5-(2-hydroxyethyl)-4-methylthiazole + ATP = 4-methyl-5-(2-phosphooxyethyl)-thiazole + ADP + H(+). The protein operates within cofactor biosynthesis; thiamine diphosphate biosynthesis; 4-methyl-5-(2-phosphoethyl)-thiazole from 5-(2-hydroxyethyl)-4-methylthiazole: step 1/1. Its function is as follows. Catalyzes the phosphorylation of the hydroxyl group of 4-methyl-5-beta-hydroxyethylthiazole (THZ). This Salmonella paratyphi A (strain ATCC 9150 / SARB42) protein is Hydroxyethylthiazole kinase.